The primary structure comprises 215 residues: uncharacterized protein (215 aa).

The protein belongs to the mimivirus L31/R44 family.

This is an uncharacterized protein from Acanthamoeba polyphaga (Amoeba).